A 135-amino-acid polypeptide reads, in one-letter code: Large ribosomal subunit protein uL16 (135 aa).

It belongs to the universal ribosomal protein uL16 family. As to quaternary structure, part of the 50S ribosomal subunit.

In terms of biological role, binds 23S rRNA and is also seen to make contacts with the A and possibly P site tRNAs. In Coprothermobacter proteolyticus (strain ATCC 35245 / DSM 5265 / OCM 4 / BT), this protein is Large ribosomal subunit protein uL16.